The chain runs to 101 residues: Cell cycle protein GpsB (101 aa).

Positions 34-71 (LDMVIKDYETFNQEIEKLQQENLHLSKQLEEAVEQGKR) form a coiled coil.

It belongs to the GpsB family. As to quaternary structure, forms polymers through the coiled coil domains. Interacts with PBP1, MreC and EzrA.

The protein localises to the cytoplasm. Its function is as follows. Divisome component that associates with the complex late in its assembly, after the Z-ring is formed, and is dependent on DivIC and PBP2B for its recruitment to the divisome. Together with EzrA, is a key component of the system that regulates PBP1 localization during cell cycle progression. Its main role could be the removal of PBP1 from the cell pole after pole maturation is completed. Also contributes to the recruitment of PBP1 to the division complex. Not essential for septum formation. This is Cell cycle protein GpsB from Bacillus pumilus (strain SAFR-032).